We begin with the raw amino-acid sequence, 277 residues long: NH(3)-dependent NAD(+) synthetase (277 aa).

36–43 (GLSGGIDS) serves as a coordination point for ATP. Asp-42 serves as a coordination point for Mg(2+). Arg-118 lines the deamido-NAD(+) pocket. Thr-138 is an ATP binding site. Glu-143 is a Mg(2+) binding site. Positions 167 and 189 each coordinate ATP.

It belongs to the NAD synthetase family. As to quaternary structure, homodimer.

It carries out the reaction deamido-NAD(+) + NH4(+) + ATP = AMP + diphosphate + NAD(+) + H(+). It participates in cofactor biosynthesis; NAD(+) biosynthesis; NAD(+) from deamido-NAD(+) (ammonia route): step 1/1. Its function is as follows. Catalyzes the ATP-dependent amidation of deamido-NAD to form NAD. Uses ammonia as a nitrogen source. The polypeptide is NH(3)-dependent NAD(+) synthetase (Chlorobaculum tepidum (strain ATCC 49652 / DSM 12025 / NBRC 103806 / TLS) (Chlorobium tepidum)).